The sequence spans 465 residues: Cysteine--tRNA ligase (465 aa).

Cys29 serves as a coordination point for Zn(2+). The short motif at 31-41 (ITPYDEVHLGH) is the 'HIGH' region element. 3 residues coordinate Zn(2+): Cys212, His237, and Glu241. Positions 269 to 273 (KMSKS) match the 'KMSKS' region motif. Lys272 is a binding site for ATP.

The protein belongs to the class-I aminoacyl-tRNA synthetase family. Monomer. The cofactor is Zn(2+).

It localises to the cytoplasm. It catalyses the reaction tRNA(Cys) + L-cysteine + ATP = L-cysteinyl-tRNA(Cys) + AMP + diphosphate. This Endomicrobium trichonymphae protein is Cysteine--tRNA ligase.